A 541-amino-acid polypeptide reads, in one-letter code: Protein wntless homolog (541 aa).

The Cytoplasmic segment spans residues 1–15 (MAGAIIENMSTKKLC). Residues 16–36 (IVGGILLVFQIVAFLVGGLIA) traverse the membrane as a helical segment. At 37 to 232 (PAPTTAVPYT…GIHQNGGFTK (196 aa)) the chain is on the lumenal side. Residues 101-232 (MEMSPWFQFM…GIHQNGGFTK (132 aa)) are interaction with Wnt proteins. Residues 233–253 (VWFAMKTFLTPSIFIIMVWYW) traverse the membrane as a helical segment. At 254-268 (RRITMMSRPPVLLEK) the chain is on the cytoplasmic side. A helical transmembrane segment spans residues 269–289 (VIFALGISMTFINIPVEWFSI). Residues 290-303 (GFDWTWMLLFGDIR) lie on the Lumenal side of the membrane. A helical membrane pass occupies residues 304–324 (QGIFYAMLLSFWIIFCGEHMM). Over 325-331 (DQHERNH) the chain is Cytoplasmic. Residues 332–352 (IAGYWKQVGPIAVGSFCLFIF) traverse the membrane as a helical segment. Residues 353-380 (DMCERGVQLTNPFYSIWTTDVGTELAMA) lie on the Lumenal side of the membrane. Residues 381–401 (FIIVAGICLCLYFLFLCFMVF) form a helical membrane-spanning segment. At 402-431 (QVFRNISGKQSSLPAMSKVRRLHYEGLIFR) the chain is on the cytoplasmic side. A helical membrane pass occupies residues 432 to 452 (FKFLMLITLACAAMTVIFFIV). Residues 453–471 (SQVSEGHWKWGGVTVQVSS) lie on the Lumenal side of the membrane. The helical transmembrane segment at 472 to 492 (AFFTGIYGMWNLYVFALMFLY) threads the bilayer. The Cytoplasmic portion of the chain corresponds to 493–541 (APSHKNYGEDQSNGDLGVHSGEELQLTTTITHVDGPTEIYKLTRKEAQE).

Belongs to the wntless family. Interacts with WNT3A. Interacts with WNT1, WNT3 and WNT5. Post-translationally, N-glycosylated. In terms of tissue distribution, expressed in the brain, skeletal muscle, heart muscle, lung, gut, liver, and kidney (at protein level). In the brain, expressed in the cortex, striatum, hippocampus and to a lesser extent in the cerebellum (at protein level). Expressed in kidney, lung, skin, intestine, brain, spinal cord, skeleton, eyes, excretion glands, tooth and palatal shelves. In the cerebellum, expressed in Purkinje cells.

It is found in the golgi apparatus membrane. The protein resides in the cytoplasmic vesicle membrane. Its subcellular location is the cell membrane. The protein localises to the endoplasmic reticulum membrane. It localises to the early endosome membrane. Its function is as follows. Regulates Wnt proteins sorting and secretion in a feedback regulatory mechanism. This reciprocal interaction plays a key role in the regulation of expression, subcellular location, binding and organelle-specific association of Wnt proteins. Also plays an important role in establishment of the anterior-posterior body axis formation during development. This chain is Protein wntless homolog (Wls), found in Mus musculus (Mouse).